The following is a 353-amino-acid chain: Probable dual-specificity RNA methyltransferase RlmN (353 aa).

The active-site Proton acceptor is the glutamate 104. The Radical SAM core domain maps to 112–341 (DGGRKTICIS…ILNRRSPGKD (230 aa)). The cysteines at positions 119 and 346 are disulfide-linked. [4Fe-4S] cluster-binding residues include cysteine 126, cysteine 130, and cysteine 133. S-adenosyl-L-methionine-binding positions include 173–174 (GE), serine 205, 228–230 (SLN), and asparagine 304. The active-site S-methylcysteine intermediate is the cysteine 346.

Belongs to the radical SAM superfamily. RlmN family. [4Fe-4S] cluster serves as cofactor.

Its subcellular location is the cytoplasm. The catalysed reaction is adenosine(2503) in 23S rRNA + 2 reduced [2Fe-2S]-[ferredoxin] + 2 S-adenosyl-L-methionine = 2-methyladenosine(2503) in 23S rRNA + 5'-deoxyadenosine + L-methionine + 2 oxidized [2Fe-2S]-[ferredoxin] + S-adenosyl-L-homocysteine. It catalyses the reaction adenosine(37) in tRNA + 2 reduced [2Fe-2S]-[ferredoxin] + 2 S-adenosyl-L-methionine = 2-methyladenosine(37) in tRNA + 5'-deoxyadenosine + L-methionine + 2 oxidized [2Fe-2S]-[ferredoxin] + S-adenosyl-L-homocysteine. Specifically methylates position 2 of adenine 2503 in 23S rRNA and position 2 of adenine 37 in tRNAs. The protein is Probable dual-specificity RNA methyltransferase RlmN of Leptospira interrogans serogroup Icterohaemorrhagiae serovar Lai (strain 56601).